Here is a 407-residue protein sequence, read N- to C-terminus: Imidazolonepropionase (407 aa).

2 residues coordinate Fe(3+): histidine 74 and histidine 76. Residues histidine 74 and histidine 76 each coordinate Zn(2+). 4-imidazolone-5-propanoate contacts are provided by arginine 83, tyrosine 146, and histidine 179. Tyrosine 146 contributes to the N-formimidoyl-L-glutamate binding site. Histidine 244 contacts Fe(3+). Residue histidine 244 participates in Zn(2+) binding. Glutamine 247 is a binding site for 4-imidazolone-5-propanoate. Aspartate 319 lines the Fe(3+) pocket. Aspartate 319 contacts Zn(2+). The N-formimidoyl-L-glutamate site is built by asparagine 321 and glycine 323. Threonine 324 contacts 4-imidazolone-5-propanoate.

Belongs to the metallo-dependent hydrolases superfamily. HutI family. Requires Zn(2+) as cofactor. The cofactor is Fe(3+).

It is found in the cytoplasm. The enzyme catalyses 4-imidazolone-5-propanoate + H2O = N-formimidoyl-L-glutamate. It functions in the pathway amino-acid degradation; L-histidine degradation into L-glutamate; N-formimidoyl-L-glutamate from L-histidine: step 3/3. In terms of biological role, catalyzes the hydrolytic cleavage of the carbon-nitrogen bond in imidazolone-5-propanoate to yield N-formimidoyl-L-glutamate. It is the third step in the universal histidine degradation pathway. The polypeptide is Imidazolonepropionase (Salmonella typhimurium (strain LT2 / SGSC1412 / ATCC 700720)).